Reading from the N-terminus, the 147-residue chain is Large ribosomal subunit protein uL13 (147 aa).

Belongs to the universal ribosomal protein uL13 family. In terms of assembly, part of the 50S ribosomal subunit.

In terms of biological role, this protein is one of the early assembly proteins of the 50S ribosomal subunit, although it is not seen to bind rRNA by itself. It is important during the early stages of 50S assembly. The chain is Large ribosomal subunit protein uL13 from Lactobacillus delbrueckii subsp. bulgaricus (strain ATCC 11842 / DSM 20081 / BCRC 10696 / JCM 1002 / NBRC 13953 / NCIMB 11778 / NCTC 12712 / WDCM 00102 / Lb 14).